A 581-amino-acid chain; its full sequence is Prolactin receptor (581 aa).

A signal peptide spans 1–24 (MKENVASRAVFILLLFLNASLLNG). Residues 25–234 (QSPPGKPKII…QIPNDFPVND (210 aa)) are Extracellular-facing. 2 Fibronectin type-III domains span residues 27 to 127 (PPGK…IVEP) and 129 to 229 (PPAN…IPND). The cysteines at positions 36 and 46 are disulfide-linked. N-linked (GlcNAc...) asparagine glycosylation is present at Asn59. A disulfide bridge connects residues Cys75 and Cys86. An N-linked (GlcNAc...) asparagine glycan is attached at Asn132. Zn(2+) contacts are provided by Asp211 and His212. Residues 215-219 (WSEWS) carry the WSXWS motif motif. The N-linked (GlcNAc...) asparagine glycan is linked to Asn233. Residues 235 to 258 (TTVWIFVAVLSAVICLIMVWAVAL) traverse the membrane as a helical segment. Residues 259 to 581 (KGYSMMTCIL…PAKEAPPALP (323 aa)) lie on the Cytoplasmic side of the membrane. A Box 1 motif motif is present at residues 267 to 275 (ILPPVPGPK). Disordered stretches follow at residues 321 to 362 (EDQQ…LFSE) and 462 to 502 (LKPS…QDKT). Over residues 329-349 (PSKEHMEQGVKPMHMDPDSDS) the composition is skewed to basic and acidic residues.

Belongs to the type I cytokine receptor family. Type 1 subfamily. Interacts with SMARCA1. Interacts with NEK3 and VAV2 and this interaction is prolactin-dependent.

It localises to the membrane. This is a receptor for the anterior pituitary hormone prolactin. This Cervus elaphus (Red deer) protein is Prolactin receptor (PRLR).